The following is a 157-amino-acid chain: MKLSHLDEKNHPKMVDVSDKNITSRIATASGMIYMSQEAFDVIKNNTAKKGPVLQTAIIAAIMGAKKTSEIIPMCHPLMLSKVETNIVEFVKECAFKLIVTVKCEGKTGVEMEALSGVSIGLLTIYDMIKAIDKSMRITDIVLESKEGGKSGKFVRS.

Residues 74–76 (MCH) and 112–113 (ME) each bind substrate. Asp127 is a catalytic residue.

The protein belongs to the MoaC family. Homohexamer; trimer of dimers.

The enzyme catalyses (8S)-3',8-cyclo-7,8-dihydroguanosine 5'-triphosphate = cyclic pyranopterin phosphate + diphosphate. Its pathway is cofactor biosynthesis; molybdopterin biosynthesis. Its function is as follows. Catalyzes the conversion of (8S)-3',8-cyclo-7,8-dihydroguanosine 5'-triphosphate to cyclic pyranopterin monophosphate (cPMP). The sequence is that of Cyclic pyranopterin monophosphate synthase from Campylobacter jejuni (strain RM1221).